A 250-amino-acid chain; its full sequence is NADH-quinone oxidoreductase subunit C (250 aa).

It belongs to the complex I 30 kDa subunit family. In terms of assembly, NDH-1 is composed of 14 different subunits. Subunits NuoB, C, D, E, F, and G constitute the peripheral sector of the complex.

It localises to the cell inner membrane. The enzyme catalyses a quinone + NADH + 5 H(+)(in) = a quinol + NAD(+) + 4 H(+)(out). Functionally, NDH-1 shuttles electrons from NADH, via FMN and iron-sulfur (Fe-S) centers, to quinones in the respiratory chain. The immediate electron acceptor for the enzyme in this species is believed to be ubiquinone. Couples the redox reaction to proton translocation (for every two electrons transferred, four hydrogen ions are translocated across the cytoplasmic membrane), and thus conserves the redox energy in a proton gradient. This Xylella fastidiosa (strain 9a5c) protein is NADH-quinone oxidoreductase subunit C.